Reading from the N-terminus, the 351-residue chain is Uroporphyrinogen decarboxylase (351 aa).

Substrate is bound by residues 25-29 (RQAGR), aspartate 74, tyrosine 151, serine 206, and histidine 325.

This sequence belongs to the uroporphyrinogen decarboxylase family. As to quaternary structure, homodimer.

The protein resides in the cytoplasm. It catalyses the reaction uroporphyrinogen III + 4 H(+) = coproporphyrinogen III + 4 CO2. Its pathway is porphyrin-containing compound metabolism; protoporphyrin-IX biosynthesis; coproporphyrinogen-III from 5-aminolevulinate: step 4/4. Functionally, catalyzes the decarboxylation of four acetate groups of uroporphyrinogen-III to yield coproporphyrinogen-III. The chain is Uroporphyrinogen decarboxylase from Chlorobium phaeobacteroides (strain BS1).